An 822-amino-acid polypeptide reads, in one-letter code: Endonuclease MutS2 (822 aa).

348–355 serves as a coordination point for ATP; it reads GPNTGGKT. The interval 707–737 is disordered; sequence SLNGKKVEPPPKSEPVPKKVKAEPPATEAKS. Over residues 709 to 728 the composition is skewed to basic and acidic residues; it reads NGKKVEPPPKSEPVPKKVKA. In terms of domain architecture, Smr spans 749–822; it reads LDCRGDRLER…GAGVTIAYLR (74 aa).

This sequence belongs to the DNA mismatch repair MutS family. MutS2 subfamily. Homodimer. Binds to stalled ribosomes, contacting rRNA.

Endonuclease that is involved in the suppression of homologous recombination and thus may have a key role in the control of bacterial genetic diversity. Functionally, acts as a ribosome collision sensor, splitting the ribosome into its 2 subunits. Detects stalled/collided 70S ribosomes which it binds and splits by an ATP-hydrolysis driven conformational change. Acts upstream of the ribosome quality control system (RQC), a ribosome-associated complex that mediates the extraction of incompletely synthesized nascent chains from stalled ribosomes and their subsequent degradation. Probably generates substrates for RQC. The protein is Endonuclease MutS2 of Synechocystis sp. (strain ATCC 27184 / PCC 6803 / Kazusa).